Reading from the N-terminus, the 1044-residue chain is Multiple epidermal growth factor-like domains protein 11 (1044 aa).

The signal sequence occupies residues 1-19 (MVLSLTGLIAFSFLQATLA). Residues 20-848 (LNPEDPNVCS…SPALGAERHS (829 aa)) lie on the Extracellular side of the membrane. Residues 24–101 (DPNVCSHWES…YYESGDFCIP (78 aa)) form the EMI domain. 14 disulfide bridges follow: Cys28–Cys89, Cys54–Cys63, Cys88–Cys99, Cys103–Cys118, Cys120–Cys129, Cys146–Cys154, Cys148–Cys161, Cys163–Cys172, Cys185–Cys197, Cys191–Cys204, Cys206–Cys215, Cys228–Cys240, Cys234–Cys247, and Cys249–Cys258. EGF-like domains follow at residues 95-130 (SGDF…PDCS), 143-173 (SNRC…WRCE), 181-216 (HGKG…VYCE), 224-259 (HGAH…AVCA), 267-302 (FGQN…DRCQ), 310-345 (FGFQ…PRCQ), 399-434 (YGDG…EVCA), 442-477 (YGPN…LDCT), and 490-520 (NESC…DTCE). N-linked (GlcNAc...) asparagine glycosylation is present at Asn270. Cystine bridges form between Cys271/Cys283, Cys277/Cys290, Cys292/Cys301, Cys314/Cys326, Cys320/Cys333, Cys335/Cys344, Cys403/Cys415, Cys409/Cys422, Cys424/Cys433, Cys446/Cys458, Cys452/Cys465, Cys467/Cys476, Cys493/Cys501, Cys495/Cys508, and Cys510/Cys519. Asn531 is a glycosylation site (N-linked (GlcNAc...) asparagine). 5 EGF-like domains span residues 571–606 (WGPN…PLCQ), 659–694 (FGQD…KDCS), 707–737 (FHAC…LFCT), 750–780 (GRVC…QHCE), and 788–823 (FGYG…IRCD). Intrachain disulfides connect Cys575–Cys587, Cys581–Cys594, Cys596–Cys605, Cys663–Cys675, Cys669–Cys682, Cys684–Cys693, Cys710–Cys718, Cys712–Cys725, Cys727–Cys736, Cys753–Cys761, Cys755–Cys768, Cys770–Cys779, Cys792–Cys804, Cys798–Cys811, and Cys813–Cys822. The helical transmembrane segment at 849–869 (VGAVTGIMLLLFLIVVLLGLF) threads the bilayer. Residues 870–1044 (AWHRRRQKEK…ANGPSQDKQS (175 aa)) are Cytoplasmic-facing. Positions 1023–1044 (GHYDLLPVRQSPANGPSQDKQS) are disordered. Over residues 1033-1044 (SPANGPSQDKQS) the composition is skewed to polar residues.

The protein belongs to the MEGF family. As to quaternary structure, homomer. Does not interact with MEGF10.

It is found in the cell membrane. The protein resides in the basolateral cell membrane. Functionally, may regulate the mosaic spacing of specific neuron subtypes in the retina through homotypic retinal neuron repulsion. Mosaics provide a mechanism to distribute each cell type evenly across the retina, ensuring that all parts of the visual field have access to a full set of processing elements. In Homo sapiens (Human), this protein is Multiple epidermal growth factor-like domains protein 11 (MEGF11).